Reading from the N-terminus, the 93-residue chain is Small ribosomal subunit protein uS19 (93 aa).

This sequence belongs to the universal ribosomal protein uS19 family.

Protein S19 forms a complex with S13 that binds strongly to the 16S ribosomal RNA. This chain is Small ribosomal subunit protein uS19, found in Cutibacterium acnes (strain DSM 16379 / KPA171202) (Propionibacterium acnes).